The primary structure comprises 1099 residues: Carbamoyl phosphate synthase large chain (1099 aa).

Residues 1–402 are carboxyphosphate synthetic domain; sequence MPRREDIKRI…ALGKALRSLE (402 aa). 12 residues coordinate ATP: R129, R169, G175, G176, E208, V210, E215, G241, I242, H243, Q285, and E299. In terms of domain architecture, ATP-grasp 1 spans 133 to 328; the sequence is KKTMEEAGLE…IAKIAALLAV (196 aa). Mg(2+) contacts are provided by Q285, E299, and N301. Residues Q285, E299, and N301 each contribute to the Mn(2+) site. An oligomerization domain region spans residues 403-541; sequence LDAAPKLDLD…STYNGVENEA (139 aa). A carbamoyl phosphate synthetic domain region spans residues 542 to 944; it reads IPTDKEKIMI…AFAKAEIAAG (403 aa). The region spanning 666-857 is the ATP-grasp 2 domain; it reads AKLLKRIGLR…VAKIAAKIMV (192 aa). 10 residues coordinate ATP: R702, K741, L743, E748, G773, V774, H775, S776, Q816, and E828. 3 residues coordinate Mg(2+): Q816, E828, and N830. Mn(2+) is bound by residues Q816, E828, and N830. An MGS-like domain is found at 945 to 1099; that stretch reads NPLPTEGAIL…VRKLTDTWKM (155 aa). An allosteric domain region spans residues 945-1099; the sequence is NPLPTEGAIL…VRKLTDTWKM (155 aa).

Belongs to the CarB family. In terms of assembly, composed of two chains; the small (or glutamine) chain promotes the hydrolysis of glutamine to ammonia, which is used by the large (or ammonia) chain to synthesize carbamoyl phosphate. Tetramer of heterodimers (alpha,beta)4. The cofactor is Mg(2+). Mn(2+) serves as cofactor.

The catalysed reaction is hydrogencarbonate + L-glutamine + 2 ATP + H2O = carbamoyl phosphate + L-glutamate + 2 ADP + phosphate + 2 H(+). It carries out the reaction hydrogencarbonate + NH4(+) + 2 ATP = carbamoyl phosphate + 2 ADP + phosphate + 2 H(+). It participates in amino-acid biosynthesis; L-arginine biosynthesis; carbamoyl phosphate from bicarbonate: step 1/1. It functions in the pathway pyrimidine metabolism; UMP biosynthesis via de novo pathway; (S)-dihydroorotate from bicarbonate: step 1/3. Large subunit of the glutamine-dependent carbamoyl phosphate synthetase (CPSase). CPSase catalyzes the formation of carbamoyl phosphate from the ammonia moiety of glutamine, carbonate, and phosphate donated by ATP, constituting the first step of 2 biosynthetic pathways, one leading to arginine and/or urea and the other to pyrimidine nucleotides. The large subunit (synthetase) binds the substrates ammonia (free or transferred from glutamine from the small subunit), hydrogencarbonate and ATP and carries out an ATP-coupled ligase reaction, activating hydrogencarbonate by forming carboxy phosphate which reacts with ammonia to form carbamoyl phosphate. This is Carbamoyl phosphate synthase large chain from Thermotoga neapolitana (strain ATCC 49049 / DSM 4359 / NBRC 107923 / NS-E).